Reading from the N-terminus, the 116-residue chain is MDLINNKLNIEIQKFCLDLEKKYNINYNNLIDLWFNKESTERLIKCEVNLENKIKFNQKYNSDTIKIMNILFLICSDGVFGKIENNDVKPLTDEDEKICVKFGYKIMIGCLNDIPI.

This is an uncharacterized protein from Invertebrate iridescent virus 6 (IIV-6).